The primary structure comprises 131 residues: Fluoride-specific ion channel FluC 2 (131 aa).

The next 4 membrane-spanning stretches (helical) occupy residues 5–25 (SAVF…NLWI), 35–55 (WLEN…FMIG), 59–79 (PLLS…MSTF), and 95–115 (LLYV…GVFV). Na(+) is bound by residues glycine 71 and threonine 74.

It belongs to the fluoride channel Fluc/FEX (TC 1.A.43) family.

The protein resides in the cell membrane. The enzyme catalyses fluoride(in) = fluoride(out). Its activity is regulated as follows. Na(+) is not transported, but it plays an essential structural role and its presence is essential for fluoride channel function. Fluoride-specific ion channel. Important for reducing fluoride concentration in the cell, thus reducing its toxicity. In Bacillus subtilis (strain 168), this protein is Fluoride-specific ion channel FluC 2.